A 109-amino-acid polypeptide reads, in one-letter code: SKSSTETPPSYNQLNYNENLQRFFNSKPATAPVEFDPIKMDQSYNEPAEAECTVSPVQCFEGSGGSGSSGNFTSGSNLNMRSVTNTSNTGTGTSSESVPLVTLTEALIS.

A disordered region spans residues 59-109 (CFEGSGGSGSSGNFTSGSNLNMRSVTNTSNTGTGTSSESVPLVTLTEALIS). Positions 69 to 98 (SGNFTSGSNLNMRSVTNTSNTGTGTSSESV) are enriched in low complexity.

As to quaternary structure, forms a heterodimer with timeless (TIM); the complex then translocates into the nucleus. Phosphorylated with a circadian rhythmicity, probably by the double-time protein (dbt). Phosphorylation could be implicated in the stability of per monomer and in the formation of heterodimer per-tim.

It is found in the nucleus. It localises to the cytoplasm. Its subcellular location is the perinuclear region. Functionally, essential for biological clock functions. Determines the period length of circadian and ultradian rhythms; an increase in PER dosage leads to shortened circadian rhythms and a decrease leads to lengthened circadian rhythms. Essential for the circadian rhythmicity of locomotor activity, eclosion behavior, and for the rhythmic component of the male courtship song that originates in the thoracic nervous system. The biological cycle depends on the rhythmic formation and nuclear localization of the TIM-PER complex. Light induces the degradation of TIM, which promotes elimination of PER. Nuclear activity of the heterodimer coordinatively regulates PER and TIM transcription through a negative feedback loop. Behaves as a negative element in circadian transcriptional loop. Does not appear to bind DNA, suggesting indirect transcriptional inhibition. In Syritta pipiens (Hoverfly), this protein is Period circadian protein (per).